A 306-amino-acid chain; its full sequence is Homoserine kinase (306 aa).

95-105 (PQSRGLGSSAA) lines the ATP pocket.

The protein belongs to the GHMP kinase family. Homoserine kinase subfamily.

The protein localises to the cytoplasm. The enzyme catalyses L-homoserine + ATP = O-phospho-L-homoserine + ADP + H(+). The protein operates within amino-acid biosynthesis; L-threonine biosynthesis; L-threonine from L-aspartate: step 4/5. In terms of biological role, catalyzes the ATP-dependent phosphorylation of L-homoserine to L-homoserine phosphate. The sequence is that of Homoserine kinase from Corynebacterium urealyticum (strain ATCC 43042 / DSM 7109).